The sequence spans 276 residues: Octanoyltransferase LipM (276 aa).

In terms of domain architecture, BPL/LPL catalytic spans 31 to 246 (GLIPPTIRFY…GFEKGLSIKL (216 aa)). Residue Cys-148 is the Acyl-thioester intermediate of the active site.

Belongs to the octanoyltransferase LipM family. As to quaternary structure, monomer.

The catalysed reaction is octanoyl-[ACP] + L-lysyl-[protein] = N(6)-octanoyl-L-lysyl-[protein] + holo-[ACP] + H(+). It functions in the pathway protein modification; protein lipoylation via endogenous pathway; protein N(6)-(lipoyl)lysine from octanoyl-[acyl-carrier-protein]. Its function is as follows. Catalyzes the transfer of endogenously produced octanoic acid from octanoyl-acyl-carrier-protein onto the lipoyl domain of GcvH, an intermediate carrier during protein lipoylation. In Halalkalibacterium halodurans (strain ATCC BAA-125 / DSM 18197 / FERM 7344 / JCM 9153 / C-125) (Bacillus halodurans), this protein is Octanoyltransferase LipM.